The following is a 278-amino-acid chain: Large ribosomal subunit protein uL2 (278 aa).

The interval 202–278 is disordered; the sequence is ANINDGKAGR…IMRSRHQRKK (77 aa).

This sequence belongs to the universal ribosomal protein uL2 family. In terms of assembly, part of the 50S ribosomal subunit. Forms a bridge to the 30S subunit in the 70S ribosome.

In terms of biological role, one of the primary rRNA binding proteins. Required for association of the 30S and 50S subunits to form the 70S ribosome, for tRNA binding and peptide bond formation. It has been suggested to have peptidyltransferase activity; this is somewhat controversial. Makes several contacts with the 16S rRNA in the 70S ribosome. This is Large ribosomal subunit protein uL2 from Rhizobium johnstonii (strain DSM 114642 / LMG 32736 / 3841) (Rhizobium leguminosarum bv. viciae).